The primary structure comprises 179 residues: Small ribosomal subunit protein uS5 (179 aa).

The S5 DRBM domain occupies 22 to 85; the sequence is MIEKLVAVNR…EYARKTMANV (64 aa).

This sequence belongs to the universal ribosomal protein uS5 family. As to quaternary structure, part of the 30S ribosomal subunit. Contacts proteins S4 and S8.

In terms of biological role, with S4 and S12 plays an important role in translational accuracy. Located at the back of the 30S subunit body where it stabilizes the conformation of the head with respect to the body. This chain is Small ribosomal subunit protein uS5, found in Xylella fastidiosa (strain 9a5c).